A 97-amino-acid polypeptide reads, in one-letter code: Citrate lyase acyl carrier protein (97 aa).

The residue at position 14 (Ser14) is an O-(phosphoribosyl dephospho-coenzyme A)serine.

The protein belongs to the CitD family. Oligomer with a subunit composition of (alpha,beta,gamma)6.

It localises to the cytoplasm. Its function is as follows. Covalent carrier of the coenzyme of citrate lyase. This Oenococcus oeni (strain ATCC BAA-331 / PSU-1) protein is Citrate lyase acyl carrier protein.